Consider the following 475-residue polypeptide: Aspartyl/glutamyl-tRNA(Asn/Gln) amidotransferase subunit B (475 aa).

Belongs to the GatB/GatE family. GatB subfamily. As to quaternary structure, heterotrimer of A, B and C subunits.

The enzyme catalyses L-glutamyl-tRNA(Gln) + L-glutamine + ATP + H2O = L-glutaminyl-tRNA(Gln) + L-glutamate + ADP + phosphate + H(+). It carries out the reaction L-aspartyl-tRNA(Asn) + L-glutamine + ATP + H2O = L-asparaginyl-tRNA(Asn) + L-glutamate + ADP + phosphate + 2 H(+). In terms of biological role, allows the formation of correctly charged Asn-tRNA(Asn) or Gln-tRNA(Gln) through the transamidation of misacylated Asp-tRNA(Asn) or Glu-tRNA(Gln) in organisms which lack either or both of asparaginyl-tRNA or glutaminyl-tRNA synthetases. The reaction takes place in the presence of glutamine and ATP through an activated phospho-Asp-tRNA(Asn) or phospho-Glu-tRNA(Gln). In Thermodesulfovibrio yellowstonii (strain ATCC 51303 / DSM 11347 / YP87), this protein is Aspartyl/glutamyl-tRNA(Asn/Gln) amidotransferase subunit B.